The primary structure comprises 162 residues: Ribosome maturation factor RimP (162 aa).

The protein belongs to the RimP family.

It localises to the cytoplasm. Functionally, required for maturation of 30S ribosomal subunits. The sequence is that of Ribosome maturation factor RimP from Ralstonia pickettii (strain 12J).